The following is a 379-amino-acid chain: Arginine biosynthesis bifunctional protein ArgJ (379 aa).

Residues threonine 141, lysine 163, threonine 174, glutamate 252, asparagine 374, and threonine 379 each coordinate substrate. Catalysis depends on threonine 174, which acts as the Nucleophile.

It belongs to the ArgJ family. Heterotetramer of two alpha and two beta chains.

Its subcellular location is the cytoplasm. The enzyme catalyses N(2)-acetyl-L-ornithine + L-glutamate = N-acetyl-L-glutamate + L-ornithine. It catalyses the reaction L-glutamate + acetyl-CoA = N-acetyl-L-glutamate + CoA + H(+). It participates in amino-acid biosynthesis; L-arginine biosynthesis; L-ornithine and N-acetyl-L-glutamate from L-glutamate and N(2)-acetyl-L-ornithine (cyclic): step 1/1. It functions in the pathway amino-acid biosynthesis; L-arginine biosynthesis; N(2)-acetyl-L-ornithine from L-glutamate: step 1/4. Its function is as follows. Catalyzes two activities which are involved in the cyclic version of arginine biosynthesis: the synthesis of N-acetylglutamate from glutamate and acetyl-CoA as the acetyl donor, and of ornithine by transacetylation between N(2)-acetylornithine and glutamate. The chain is Arginine biosynthesis bifunctional protein ArgJ from Aquifex aeolicus (strain VF5).